We begin with the raw amino-acid sequence, 94 residues long: Large ribosomal subunit protein uL23 (94 aa).

The protein belongs to the universal ribosomal protein uL23 family. As to quaternary structure, part of the 50S ribosomal subunit. Contacts protein L29, and trigger factor when it is bound to the ribosome.

Its function is as follows. One of the early assembly proteins it binds 23S rRNA. One of the proteins that surrounds the polypeptide exit tunnel on the outside of the ribosome. Forms the main docking site for trigger factor binding to the ribosome. The chain is Large ribosomal subunit protein uL23 from Mycoplasma mycoides subsp. mycoides SC (strain CCUG 32753 / NCTC 10114 / PG1).